Here is a 330-residue protein sequence, read N- to C-terminus: Aspartate--ammonia ligase (330 aa).

The protein belongs to the class-II aminoacyl-tRNA synthetase family. AsnA subfamily.

The protein localises to the cytoplasm. The catalysed reaction is L-aspartate + NH4(+) + ATP = L-asparagine + AMP + diphosphate + H(+). It functions in the pathway amino-acid biosynthesis; L-asparagine biosynthesis; L-asparagine from L-aspartate (ammonia route): step 1/1. This chain is Aspartate--ammonia ligase, found in Streptococcus pyogenes serotype M5 (strain Manfredo).